The chain runs to 155 residues: Small ribosomal subunit protein uS7 (155 aa).

This sequence belongs to the universal ribosomal protein uS7 family. As to quaternary structure, part of the 30S ribosomal subunit. Contacts proteins S9 and S11.

Its function is as follows. One of the primary rRNA binding proteins, it binds directly to 16S rRNA where it nucleates assembly of the head domain of the 30S subunit. Is located at the subunit interface close to the decoding center, probably blocks exit of the E-site tRNA. In Helicobacter pylori (strain Shi470), this protein is Small ribosomal subunit protein uS7.